Reading from the N-terminus, the 367-residue chain is MEVEYMNFNELNLSDNILNAIRNKGFEKPTDIQMKVIPLFLNDEYNIVAQARTGSGKTASFAIPLIELVNENNGIEAIILTPTRELAIQVADEIESLKGNKNLKIAKIYGGKAIYPQIKALKNANIVVGTPGRILDHINRGTLNLKNVKYFILDEADEMLNMGFIKDVEKILNACNKDKRILLFSATMPREILNLAKKYMGDYSFIKAKINANIEQSYVEVNENERFEALCRLLKNKEFYGLVFCKTKRDTKELASMLRDIGFKAGAIHGDLSQSQREKVIRLFKQKKIRILIATDVMSRGIDVNDLNCVINYHLPQNPESYMHRIGRTGRAGKKGKAISIINRREYKKLRYIERAMKLKIKKLKFG.

A Q motif motif is present at residues 6–34 (MNFNELNLSDNILNAIRNKGFEKPTDIQM). Positions 38–206 (PLFLNDEYNI…KKYMGDYSFI (169 aa)) constitute a Helicase ATP-binding domain. 51-58 (ARTGSGKT) lines the ATP pocket. Residues 154–157 (DEAD) carry the DEAD box motif. The region spanning 213-367 (NIEQSYVEVN…KLKIKKLKFG (155 aa)) is the Helicase C-terminal domain.

This sequence belongs to the DEAD box helicase family. Homodimer.

The catalysed reaction is ATP + H2O = ADP + phosphate + H(+). The chain is Probable ATP-dependent RNA helicase MJ0669 from Methanocaldococcus jannaschii (strain ATCC 43067 / DSM 2661 / JAL-1 / JCM 10045 / NBRC 100440) (Methanococcus jannaschii).